The primary structure comprises 491 residues: Chromosomal replication initiator protein DnaA (491 aa).

Residues 1–69 are domain I, interacts with DnaA modulators; that stretch reads MTTWDKCLKK…TIQECHGNDL (69 aa). The segment at 69–154 is domain II; the sequence is LIIEYSNKKF…KEDEEYSFGL (86 aa). Residues 155-371 form a domain III, AAA+ region region; the sequence is PLKEKYVFDS…GALNRVLTTS (217 aa). 4 residues coordinate ATP: Gly-199, Gly-201, Lys-202, and Thr-203. The interval 372 to 491 is domain IV, binds dsDNA; it reads KFNHKDPTIE…YELLLDKISR (120 aa).

This sequence belongs to the DnaA family. Oligomerizes as a right-handed, spiral filament on DNA at oriC.

Its subcellular location is the cytoplasm. Functionally, plays an essential role in the initiation and regulation of chromosomal replication. ATP-DnaA binds to the origin of replication (oriC) to initiate formation of the DNA replication initiation complex once per cell cycle. Binds the DnaA box (a 9 base pair repeat at the origin) and separates the double-stranded (ds)DNA. Forms a right-handed helical filament on oriC DNA; dsDNA binds to the exterior of the filament while single-stranded (ss)DNA is stabiized in the filament's interior. The ATP-DnaA-oriC complex binds and stabilizes one strand of the AT-rich DNA unwinding element (DUE), permitting loading of DNA polymerase. After initiation quickly degrades to an ADP-DnaA complex that is not apt for DNA replication. Binds acidic phospholipids. The sequence is that of Chromosomal replication initiator protein DnaA from Francisella tularensis subsp. holarctica (strain OSU18).